We begin with the raw amino-acid sequence, 433 residues long: MRAELLAVGDELLYGDIVNGNAAWLGRQLADVGVTVTTSTVVGDDIDMIATAIRVALDRADVVIMTGGLGPTQDDLTREGIAAAAGVGLRRDDFLESMLRRRFRDMGRGDGGRRVPQMNYRQADLPEGAQPLPNGTGTAPGIRMEIGTGVVYAMPGVPFEMNGMFTASVLPDILRRAGQPAVVVHRVLRTAGMWESAVAEALADEVDRLARIGNPRIAFLASGGQTRVRITARARDRAEAEMLIAPVETAARTALGAGVYGGADDSLEGVVLGLLVQRSATLAVAESITGGLLAGRLTDVPGASAAFRGGIVSYATEVKASALGVDEGLLAAEGAVSSRTAAAMAAGVRSRLGATYGLATTGVAGPQPQEDKPVGTLHIGLAGPDGTVTRSVRLPGDRPRIRTYAVVSALDLVRRMLAGLPNSEMTTTGDGAP.

It belongs to the CinA family.

In Frankia casuarinae (strain DSM 45818 / CECT 9043 / HFP020203 / CcI3), this protein is CinA-like protein.